We begin with the raw amino-acid sequence, 252 residues long: 4-hydroxy-tetrahydrodipicolinate reductase (252 aa).

Residues 8–13 (GCCGKM), 84–86 (CST), and 108–111 (SANM) contribute to the NAD(+) site. His-141 acts as the Proton donor/acceptor in catalysis. A (S)-2,3,4,5-tetrahydrodipicolinate-binding site is contributed by His-142. Lys-145 functions as the Proton donor in the catalytic mechanism. 151–152 (GT) serves as a coordination point for (S)-2,3,4,5-tetrahydrodipicolinate.

This sequence belongs to the DapB family.

The protein resides in the cytoplasm. It catalyses the reaction (S)-2,3,4,5-tetrahydrodipicolinate + NAD(+) + H2O = (2S,4S)-4-hydroxy-2,3,4,5-tetrahydrodipicolinate + NADH + H(+). The enzyme catalyses (S)-2,3,4,5-tetrahydrodipicolinate + NADP(+) + H2O = (2S,4S)-4-hydroxy-2,3,4,5-tetrahydrodipicolinate + NADPH + H(+). The protein operates within amino-acid biosynthesis; L-lysine biosynthesis via DAP pathway; (S)-tetrahydrodipicolinate from L-aspartate: step 4/4. Functionally, catalyzes the conversion of 4-hydroxy-tetrahydrodipicolinate (HTPA) to tetrahydrodipicolinate. The chain is 4-hydroxy-tetrahydrodipicolinate reductase from Clostridium botulinum (strain Eklund 17B / Type B).